The sequence spans 42 residues: Photosystem I reaction center subunit IX (42 aa).

The helical transmembrane segment at 8–28 (YLSTAPVLFTVWLSFTASFII) threads the bilayer.

The protein belongs to the PsaJ family.

It localises to the plastid. The protein localises to the chloroplast thylakoid membrane. Its function is as follows. May help in the organization of the PsaE and PsaF subunits. The chain is Photosystem I reaction center subunit IX from Rhodomonas salina (Cryptomonas salina).